Reading from the N-terminus, the 234-residue chain is Zein-alpha GZ19AB11 (234 aa).

The signal sequence occupies residues 1 to 21 (MAAKIFCLLMLLGLSASAATA).

The protein belongs to the zein family.

Zeins are major seed storage proteins. In Zea mays (Maize), this protein is Zein-alpha GZ19AB11.